A 198-amino-acid polypeptide reads, in one-letter code: Recombination protein RecR (198 aa).

The C4-type zinc finger occupies 57 to 72 (CAMCNTFTESAVCETC). A Toprim domain is found at 80–175 (ALLCVVETPG…KVSRLARGVP (96 aa)).

The protein belongs to the RecR family.

May play a role in DNA repair. It seems to be involved in an RecBC-independent recombinational process of DNA repair. It may act with RecF and RecO. This Herminiimonas arsenicoxydans protein is Recombination protein RecR.